The chain runs to 264 residues: Thymidylate synthase (264 aa).

DUMP is bound at residue Arg21. His51 lines the (6R)-5,10-methylene-5,6,7,8-tetrahydrofolate pocket. Residue 126-127 participates in dUMP binding; the sequence is RR. The Nucleophile role is filled by Cys146. DUMP contacts are provided by residues 166-169, Asn177, and 207-209; these read RSCD and HLY. Asp169 is a binding site for (6R)-5,10-methylene-5,6,7,8-tetrahydrofolate. Ala263 lines the (6R)-5,10-methylene-5,6,7,8-tetrahydrofolate pocket.

Belongs to the thymidylate synthase family. Bacterial-type ThyA subfamily. As to quaternary structure, homodimer.

It localises to the cytoplasm. The enzyme catalyses dUMP + (6R)-5,10-methylene-5,6,7,8-tetrahydrofolate = 7,8-dihydrofolate + dTMP. It participates in pyrimidine metabolism; dTTP biosynthesis. Catalyzes the reductive methylation of 2'-deoxyuridine-5'-monophosphate (dUMP) to 2'-deoxythymidine-5'-monophosphate (dTMP) while utilizing 5,10-methylenetetrahydrofolate (mTHF) as the methyl donor and reductant in the reaction, yielding dihydrofolate (DHF) as a by-product. This enzymatic reaction provides an intracellular de novo source of dTMP, an essential precursor for DNA biosynthesis. This chain is Thymidylate synthase, found in Salmonella paratyphi C (strain RKS4594).